A 329-amino-acid polypeptide reads, in one-letter code: Biotin synthase (329 aa).

The 225-residue stretch at 38 to 262 (NTIQVSTLLS…IMPHSYIRLS (225 aa)) folds into the Radical SAM core domain. 3 residues coordinate [4Fe-4S] cluster: C53, C57, and C60. [2Fe-2S] cluster-binding residues include C97, C128, C188, and R260.

The protein belongs to the radical SAM superfamily. Biotin synthase family. In terms of assembly, homodimer. The cofactor is [4Fe-4S] cluster. Requires [2Fe-2S] cluster as cofactor.

The enzyme catalyses (4R,5S)-dethiobiotin + (sulfur carrier)-SH + 2 reduced [2Fe-2S]-[ferredoxin] + 2 S-adenosyl-L-methionine = (sulfur carrier)-H + biotin + 2 5'-deoxyadenosine + 2 L-methionine + 2 oxidized [2Fe-2S]-[ferredoxin]. The protein operates within cofactor biosynthesis; biotin biosynthesis; biotin from 7,8-diaminononanoate: step 2/2. Catalyzes the conversion of dethiobiotin (DTB) to biotin by the insertion of a sulfur atom into dethiobiotin via a radical-based mechanism. The protein is Biotin synthase of Acinetobacter calcoaceticus.